Reading from the N-terminus, the 632-residue chain is Probable potassium transport system protein Kup 2 (632 aa).

The next 12 membrane-spanning stretches (helical) occupy residues 19–39 (FWGL…TSPL), 58–78 (MIVL…VTAK), 110–130 (MFLM…SMIT), 147–167 (PALE…LFAV), 178–198 (AFGP…IVHI), 216–236 (FLLS…LAVT), 257–277 (WLFF…ALVL), 290–310 (MVPE…TVIA), 347–367 (IYLP…VLLF), 377–397 (YGIA…VVIW), 404–424 (AAVA…FFSA), and 429–449 (LFEG…TIWT).

It belongs to the HAK/KUP transporter (TC 2.A.72) family.

Its subcellular location is the cell inner membrane. It carries out the reaction K(+)(in) + H(+)(in) = K(+)(out) + H(+)(out). Its function is as follows. Transport of potassium into the cell. Likely operates as a K(+):H(+) symporter. This Bradyrhizobium sp. (strain BTAi1 / ATCC BAA-1182) protein is Probable potassium transport system protein Kup 2.